Reading from the N-terminus, the 205-residue chain is Protein GrpE (205 aa).

The interval 172-205 is disordered; sequence KGSTGPGAPAEPAAAPNPYASNGADTGGSFDTKA. A compositionally biased stretch (low complexity) spans 177-195; sequence PGAPAEPAAAPNPYASNGA.

Belongs to the GrpE family. In terms of assembly, homodimer.

The protein localises to the cytoplasm. In terms of biological role, participates actively in the response to hyperosmotic and heat shock by preventing the aggregation of stress-denatured proteins, in association with DnaK and GrpE. It is the nucleotide exchange factor for DnaK and may function as a thermosensor. Unfolded proteins bind initially to DnaJ; upon interaction with the DnaJ-bound protein, DnaK hydrolyzes its bound ATP, resulting in the formation of a stable complex. GrpE releases ADP from DnaK; ATP binding to DnaK triggers the release of the substrate protein, thus completing the reaction cycle. Several rounds of ATP-dependent interactions between DnaJ, DnaK and GrpE are required for fully efficient folding. This chain is Protein GrpE, found in Caulobacter sp. (strain K31).